A 1304-amino-acid polypeptide reads, in one-letter code: Angiotensin-converting enzyme (1304 aa).

Residues methionine 1–alanine 27 form the signal peptide. Residues leucine 28–glutamine 1257 lie on the Extracellular side of the membrane. 6 N-linked (GlcNAc...) asparagine glycosylation sites follow: asparagine 36, asparagine 52, asparagine 72, asparagine 109, asparagine 144, and asparagine 158. 2 Peptidase M2 domains span residues serine 38–proline 622 and valine 641–proline 1220. An intrachain disulfide couples cysteine 155 to cysteine 163. Tyrosine 229 contributes to the chloride binding site. Asparagine 316 carries an N-linked (GlcNAc...) asparagine glycan. The cysteines at positions 357 and 375 are disulfide-linked. Position 388 (histidine 388) interacts with Zn(2+). The active-site Proton acceptor 1 is glutamate 389. The Zn(2+) site is built by histidine 392 and glutamate 416. N-linked (GlcNAc...) asparagine glycans are attached at residues asparagine 440, asparagine 443, and asparagine 507. Histidine 518 serves as the catalytic Proton donor 1. Residue arginine 527 coordinates chloride. Residues cysteine 543 and cysteine 555 are joined by a disulfide bond. The N-linked (GlcNAc...) asparagine glycan is linked to asparagine 675. Residues asparagine 693 and asparagine 712 are each glycosylated (N-linked (GlcNAc...) (complex) asparagine). Cysteine 755 and cysteine 761 form a disulfide bridge. An N-linked (GlcNAc...) asparagine glycan is attached at asparagine 758. Residues arginine 789 and tyrosine 827 each contribute to the chloride site. N-linked (GlcNAc...) asparagine glycosylation is present at asparagine 940. Cysteine 955 and cysteine 973 form a disulfide bridge. Zn(2+) is bound at residue histidine 986. Glutamate 987 acts as the Proton acceptor 2 in catalysis. Zn(2+)-binding residues include histidine 990 and glutamate 1014. Positions 1088 and 1092 each coordinate chloride. The active-site Proton donor 2 is the histidine 1116. Residue arginine 1125 coordinates chloride. Cysteine 1141 and cysteine 1153 are joined by a disulfide. The N-linked (GlcNAc...) asparagine glycan is linked to asparagine 1189. The juxtamembrane stalk stretch occupies residues histidine 1213–arginine 1254. The chain crosses the membrane as a helical span at residues tryptophan 1258–leucine 1274. Residues serine 1275 to serine 1304 are Cytoplasmic-facing. The residue at position 1297 (serine 1297) is a Phosphoserine.

The protein belongs to the peptidase M2 family. In terms of assembly, monomer and homodimer; homodimerizes following binding to an inhibitor. Interacts with calmodulin (CALM1, CALM2 or CALM3); interaction takes place in the cytoplasmic region and regulates phosphorylation and proteolytic cleavage. Zn(2+) is required as a cofactor. The cofactor is chloride. Post-translationally, produced following proteolytic cleavage by secretase enzymes that cleave the transmembrane form in the juxtamembrane stalk region upstream of the transmembrane region. Cleavage can take place at different sites of the juxtamembrane stalk region. Phosphorylated by CK2 on Ser-1297; which allows membrane retention. Phosphorylated on tyrosine residues on its extracellular part, promoting cleavage by secretase enzymes and formation of the soluble form (Angiotensin-converting enzyme, soluble form).

The protein resides in the cell membrane. Its subcellular location is the cytoplasm. It is found in the secreted. The enzyme catalyses Release of a C-terminal dipeptide, oligopeptide-|-Xaa-Yaa, when Xaa is not Pro, and Yaa is neither Asp nor Glu. Thus, conversion of angiotensin I to angiotensin II, with increase in vasoconstrictor activity, but no action on angiotensin II.. It catalyses the reaction angiotensin I + H2O = L-histidyl-L-leucine + angiotensin II. The catalysed reaction is bradykinin + H2O = L-Phe-L-Arg + bradykinin(1-7). It carries out the reaction substance P + H2O = substance P(1-9) + L-Leu-L-Met-NH2. The enzyme catalyses substance P + H2O = substance P(1-8) + Gly-L-Leu-L-Met-NH2. It catalyses the reaction substance P + H2O = L-Phe-L-Phe-Gly-L-Leu-L-Met-NH2 + substance P(1-6). The catalysed reaction is neurotensin + H2O = neurotensin(1-11) + L-isoleucyl-L-leucine. It carries out the reaction goralatide + H2O = N-acetyl-L-seryl-L-aspartate + L-lysyl-L-proline. The enzyme catalyses Met-enkephalin + H2O = L-phenylalanyl-L-methionine + L-tyrosylglycylglycine. It catalyses the reaction Leu-enkephalin + H2O = L-tyrosylglycylglycine + L-phenylalanyl-L-leucine. The catalysed reaction is Met-enkephalin-Arg-Phe + H2O = L-arginyl-L-phenylalanine + Met-enkephalin. The dipeptidyl carboxypeptidase activity is strongly activated by chloride. The dipeptidyl carboxypeptidase activity is specifically inhibited by lisinopril, captopril and enalaprilat. With respect to regulation, strongly inhibited by lisinopril and captopril. Functionally, dipeptidyl carboxypeptidase that removes dipeptides from the C-terminus of a variety of circulating hormones, such as angiotensin I, bradykinin or enkephalins, thereby playing a key role in the regulation of blood pressure, electrolyte homeostasis or synaptic plasticity. Composed of two similar catalytic domains, each possessing a functional active site, with different selectivity for substrates. Plays a major role in the angiotensin-renin system that regulates blood pressure and sodium retention by the kidney by converting angiotensin I to angiotensin II, resulting in an increase of the vasoconstrictor activity of angiotensin. Also able to inactivate bradykinin, a potent vasodilator, and therefore enhance the blood pressure response. Acts as a regulator of synaptic transmission by mediating cleavage of neuropeptide hormones, such as substance P, neurotensin or enkephalins. Catalyzes degradation of different enkephalin neuropeptides (Met-enkephalin, Leu-enkephalin, Met-enkephalin-Arg-Phe and possibly Met-enkephalin-Arg-Gly-Leu). Acts as a regulator of synaptic plasticity in the nucleus accumbens of the brain by mediating cleavage of Met-enkephalin-Arg-Phe, a strong ligand of Mu-type opioid receptor OPRM1, into Met-enkephalin. Met-enkephalin-Arg-Phe cleavage by ACE decreases activation of OPRM1, leading to long-term synaptic potentiation of glutamate release. Also acts as a regulator of hematopoietic stem cell differentiation by mediating degradation of hemoregulatory peptide N-acetyl-SDKP (AcSDKP). Acts as a regulator of cannabinoid signaling pathway by mediating degradation of hemopressin, an antagonist peptide of the cannabinoid receptor CNR1. Involved in amyloid-beta metabolism by catalyzing degradation of Amyloid-beta protein 40 and Amyloid-beta protein 42 peptides, thereby preventing plaque formation. Catalyzes cleavage of cholecystokinin (maturation of Cholecystokinin-8 and Cholecystokinin-5) and Gonadoliberin-1 (both maturation and degradation) hormones. Degradation of hemoregulatory peptide N-acetyl-SDKP (AcSDKP) and amyloid-beta proteins is mediated by the N-terminal catalytic domain, while angiotensin I and cholecystokinin cleavage is mediated by the C-terminal catalytic region. Soluble form that is released in blood plasma and other body fluids following proteolytic cleavage in the juxtamembrane stalk region. Its function is as follows. Isoform produced by alternative promoter usage that is specifically expressed in spermatocytes and adult testis, and which is required for male fertility. In contrast to somatic isoforms, only contains one catalytic domain. Acts as a dipeptidyl carboxypeptidase that removes dipeptides from the C-terminus of substrates. The identity of substrates that are needed for male fertility is unknown. May also have a glycosidase activity which releases GPI-anchored proteins from the membrane by cleaving the mannose linkage in the GPI moiety. The GPIase activity was reported to be essential for the egg-binding ability of the sperm. This activity is however unclear and has been challenged by other groups, suggesting that it may be indirect. The chain is Angiotensin-converting enzyme from Pan troglodytes (Chimpanzee).